We begin with the raw amino-acid sequence, 299 residues long: Anti-sigma-D factor RsdA (299 aa).

The chain crosses the membrane as a helical span at residues 86–106; it reads LAAVGSVAAALLVLSGFGAVV. The interval 187–299 is disordered; it reads NTKVETRDPN…APETPVSPTH (113 aa). Composition is skewed to low complexity over residues 201–212 and 250–271; these read PGSPSNPAAPGS and PNST…EPGS.

Interacts with ECF RNA polymerase sigma factor SigD; this should inhibit the interaction of SigD with the RNA polymerase catalytic core. In terms of processing, the cytosolic fragment is degraded by a ClpP1-ClpP2-ClpX complex, as would be expected after S1P and S2P intramembrane proteolysis. This releases SigD so that it may bind to the RNA polymerase catalytic core.

It localises to the cell membrane. An anti-sigma factor for extracytoplasmic function (ECF) sigma factor SigD. ECF sigma factors are held in an inactive form by an anti-sigma factor until released by regulated intramembrane proteolysis (RIP). RIP occurs when an extracytoplasmic signal triggers a concerted proteolytic cascade to transmit information and elicit cellular responses. The membrane-spanning regulatory substrate protein is first cut extracytoplasmically (site-1 protease, S1P), then within the membrane itself (site-2 protease, S2P), while cytoplasmic proteases finish degrading the regulatory protein, liberating the sigma factor. Neither S1P nor S2P proteases have been so far identified for this anti-sigma factor. This chain is Anti-sigma-D factor RsdA (rsda), found in Mycobacterium bovis (strain ATCC BAA-935 / AF2122/97).